The primary structure comprises 265 residues: uncharacterized protein (265 aa).

A divalent metal cation is bound by residues His-7, His-9, Glu-95, His-131, His-156, and Asp-206.

Belongs to the metallo-dependent hydrolases superfamily. TatD-type hydrolase family. It depends on a divalent metal cation as a cofactor.

This is an uncharacterized protein from Buchnera aphidicola subsp. Baizongia pistaciae (strain Bp).